The chain runs to 299 residues: Polyamine aminopropyltransferase (299 aa).

Residues 6–252 (IVLLFALLCT…SLPNQQALQQ (247 aa)) enclose the PABS domain. Residues Gln36, Glu120, and 147 to 148 (DA) contribute to the S-methyl-5'-thioadenosine site. Asp168 acts as the Proton acceptor in catalysis.

Belongs to the spermidine/spermine synthase family. Homodimer or homotetramer.

The protein resides in the cytoplasm. It catalyses the reaction S-adenosyl 3-(methylsulfanyl)propylamine + putrescine = S-methyl-5'-thioadenosine + spermidine + H(+). Its pathway is amine and polyamine biosynthesis; spermidine biosynthesis; spermidine from putrescine: step 1/1. Catalyzes the irreversible transfer of a propylamine group from the amino donor S-adenosylmethioninamine (decarboxy-AdoMet) to putrescine (1,4-diaminobutane) to yield spermidine. The chain is Polyamine aminopropyltransferase from Vibrio vulnificus (strain CMCP6).